A 333-amino-acid chain; its full sequence is S-adenosylmethionine-dependent nucleotide dehydratase (333 aa).

The Radical SAM core domain occupies 1–239 (MNIKTIVINW…SAPQKQNNVI (239 aa)). C16, C20, and C23 together coordinate [4Fe-4S] cluster.

Belongs to the radical SAM superfamily. Viperin family. [4Fe-4S] cluster is required as a cofactor.

It carries out the reaction GTP + AH2 + S-adenosyl-L-methionine = 3'-deoxy-3',4'-didehydro-GTP + 5'-deoxyadenosine + L-methionine + A + H2O + H(+). Functionally, expression of pVip56 in E.coli (strain MG1655) confers resistance to phage P1; has no effect against T7. Catalyzes the conversion of guanosine triphosphate (GTP) to 3'-deoxy-3',4'-didehydro-GTP (ddhGTP), probably via a SAM-dependent radical mechanism. The modified nucleotide represses transcription from T7 RNA polymerase-directed genes (possibly by acting as chain terminators), strongly suggesting these nucleotides block viral polymerase transcription. How this protein allows bacteria to resist viruses that do not encode their own RNA polymerase (such as lambda, P1) is unknown. In Fibrobacter sp. (strain UWH6), this protein is S-adenosylmethionine-dependent nucleotide dehydratase.